We begin with the raw amino-acid sequence, 785 residues long: Altered inheritance of mitochondria protein 3-2 (785 aa).

3 disordered regions span residues 33–122 (TGYQ…QPYM), 142–406 (QQVA…SENL), and 418–785 (NVDV…RLHK). Residues 91–102 (GSSGNSANGSSA) are compositionally biased toward low complexity. Composition is skewed to polar residues over residues 103 to 122 (TIPTLSNTNNTAQLNEQPYM) and 143 to 199 (QVAT…QLNI). Positions 249–260 (KPYDWEEQKTTK) are enriched in basic and acidic residues. Polar residues-rich tracts occupy residues 283–310 (SRQGSNSTPPSRTHTGNNTSTASVTTTG), 350–366 (ATNNSSDLKLSGAQNTK), 375–388 (TNKSAERPNSSNVM), 395–405 (QMNTKANSSEN), and 455–465 (SSISRDNYNSI). The span at 478–497 (NTGEREGAQELKADIAERSQ) shows a compositional bias: basic and acidic residues. Over residues 527-556 (AQTSSDIPQKSSLVTDESNISVPNKSQQPM) the composition is skewed to polar residues. Composition is skewed to basic and acidic residues over residues 587 to 613 (KSLEESHTPSNKLSEKPKPPKKPEQLK) and 624 to 637 (KNMKNKDQLFDNKN). Over residues 659 to 671 (SLTSEGNHMNLNT) the composition is skewed to polar residues. 2 stretches are compositionally biased toward basic and acidic residues: residues 672–686 (EKGKETTIEKPDESK) and 700–710 (FKREELSKEVV).

It belongs to the AIM3 family.

Its subcellular location is the membrane raft. This Candida glabrata (strain ATCC 2001 / BCRC 20586 / JCM 3761 / NBRC 0622 / NRRL Y-65 / CBS 138) (Yeast) protein is Altered inheritance of mitochondria protein 3-2 (AIM3-2).